Here is a 212-residue protein sequence, read N- to C-terminus: Riboflavin kinase (212 aa).

Residues Met-1–Ser-87 form an H-T-H motif-like region. The riboflavin kinase stretch occupies residues Gly-88–Val-212. Gly-97–Ala-102 contacts CDP. Mg(2+)-binding residues include Thr-124 and Asn-126. Residues Thr-180 and Glu-188 each contribute to the FMN site. Val-193–Arg-196 is a binding site for CDP.

It belongs to the archaeal riboflavin kinase family. The cofactor is Mg(2+).

It catalyses the reaction riboflavin + CTP = CDP + FMN + H(+). The protein operates within cofactor biosynthesis; FMN biosynthesis; FMN from riboflavin (CTP route): step 1/1. In terms of biological role, catalyzes the CTP-dependent phosphorylation of riboflavin (vitamin B2) to form flavin mononucleotide (FMN). The chain is Riboflavin kinase (ribK) from Pyrococcus abyssi (strain GE5 / Orsay).